Here is a 336-residue protein sequence, read N- to C-terminus: Aspartate carbamoyltransferase catalytic subunit (336 aa).

The carbamoyl phosphate site is built by Arg-72 and Thr-73. Lys-100 is a binding site for L-aspartate. Carbamoyl phosphate contacts are provided by Arg-122, His-152, and Gln-155. 2 residues coordinate L-aspartate: Arg-185 and Arg-240. Residues Gly-281 and Pro-282 each coordinate carbamoyl phosphate.

This sequence belongs to the aspartate/ornithine carbamoyltransferase superfamily. ATCase family. In terms of assembly, heterododecamer (2C3:3R2) of six catalytic PyrB chains organized as two trimers (C3), and six regulatory PyrI chains organized as three dimers (R2).

It catalyses the reaction carbamoyl phosphate + L-aspartate = N-carbamoyl-L-aspartate + phosphate + H(+). It participates in pyrimidine metabolism; UMP biosynthesis via de novo pathway; (S)-dihydroorotate from bicarbonate: step 2/3. In terms of biological role, catalyzes the condensation of carbamoyl phosphate and aspartate to form carbamoyl aspartate and inorganic phosphate, the committed step in the de novo pyrimidine nucleotide biosynthesis pathway. In Marinobacter nauticus (strain ATCC 700491 / DSM 11845 / VT8) (Marinobacter aquaeolei), this protein is Aspartate carbamoyltransferase catalytic subunit.